The sequence spans 191 residues: Phosphoheptose isomerase (191 aa).

The SIS domain maps to 37-191; sequence IAESFKQDGK…IIQLIEKEME (155 aa). 52–54 contributes to the substrate binding site; it reads NGG. Residues H61 and E65 each contribute to the Zn(2+) site. Residues E65, 93 to 94, 119 to 121, S124, and Q172 each bind substrate; these read ND and STS. Q172 and H180 together coordinate Zn(2+).

Belongs to the SIS family. GmhA subfamily. Homotetramer. Zn(2+) serves as cofactor.

The protein localises to the cytoplasm. The catalysed reaction is 2 D-sedoheptulose 7-phosphate = D-glycero-alpha-D-manno-heptose 7-phosphate + D-glycero-beta-D-manno-heptose 7-phosphate. The protein operates within carbohydrate biosynthesis; D-glycero-D-manno-heptose 7-phosphate biosynthesis; D-glycero-alpha-D-manno-heptose 7-phosphate and D-glycero-beta-D-manno-heptose 7-phosphate from sedoheptulose 7-phosphate: step 1/1. Its pathway is bacterial outer membrane biogenesis; LPS core biosynthesis. In terms of biological role, catalyzes the isomerization of sedoheptulose 7-phosphate in D-glycero-D-manno-heptose 7-phosphate. In Vibrio vulnificus (strain CMCP6), this protein is Phosphoheptose isomerase.